Here is a 56-residue protein sequence, read N- to C-terminus: Cytochrome b-c1 complex subunit 10 (56 aa).

The Mitochondrial matrix segment spans residues 1–12 (MVTRFLGPRYRE). A helical transmembrane segment spans residues 13–35 (LVKNWVPTAYTWGAVGAVGLVWA). Residues 36–56 (TDWRLILDWVPYINGKFKKDN) lie on the Mitochondrial intermembrane side of the membrane.

It belongs to the UQCR11/QCR10 family. In terms of assembly, component of the ubiquinol-cytochrome c oxidoreductase (cytochrome b-c1 complex, complex III, CIII), a multisubunit enzyme composed of 11 subunits. The complex is composed of 3 respiratory subunits cytochrome b, cytochrome c1 and Rieske protein UQCRFS1, 2 core protein subunits UQCRC1/QCR1 and UQCRC2/QCR2, and 6 low-molecular weight protein subunits UQCRH/QCR6, UQCRB/QCR7, UQCRQ/QCR8, UQCR10/QCR9, UQCR11/QCR10 and subunit 9, the cleavage product of Rieske protein UQCRFS1. The complex exists as an obligatory dimer and forms supercomplexes (SCs) in the inner mitochondrial membrane with NADH-ubiquinone oxidoreductase (complex I, CI) and cytochrome c oxidase (complex IV, CIV), resulting in different assemblies (supercomplex SCI(1)III(2)IV(1) and megacomplex MCI(2)III(2)IV(2)).

It is found in the mitochondrion inner membrane. Its function is as follows. Component of the ubiquinol-cytochrome c oxidoreductase, a multisubunit transmembrane complex that is part of the mitochondrial electron transport chain which drives oxidative phosphorylation. The respiratory chain contains 3 multisubunit complexes succinate dehydrogenase (complex II, CII), ubiquinol-cytochrome c oxidoreductase (cytochrome b-c1 complex, complex III, CIII) and cytochrome c oxidase (complex IV, CIV), that cooperate to transfer electrons derived from NADH and succinate to molecular oxygen, creating an electrochemical gradient over the inner membrane that drives transmembrane transport and the ATP synthase. The cytochrome b-c1 complex catalyzes electron transfer from ubiquinol to cytochrome c, linking this redox reaction to translocation of protons across the mitochondrial inner membrane, with protons being carried across the membrane as hydrogens on the quinol. In the process called Q cycle, 2 protons are consumed from the matrix, 4 protons are released into the intermembrane space and 2 electrons are passed to cytochrome c. QCR10 has a role in CIII assembly and RIP1 stability. This Homo sapiens (Human) protein is Cytochrome b-c1 complex subunit 10 (UQCR11).